Here is a 169-residue protein sequence, read N- to C-terminus: 2-C-methyl-D-erythritol 2,4-cyclodiphosphate synthase (169 aa).

2 residues coordinate a divalent metal cation: D13 and H15. 4-CDP-2-C-methyl-D-erythritol 2-phosphate-binding positions include 13–15 (DVH) and 39–40 (HS). Residue H47 coordinates a divalent metal cation. 4-CDP-2-C-methyl-D-erythritol 2-phosphate is bound by residues 61–63 (DIG), 66–70 (FPDTD), F144, and R147.

This sequence belongs to the IspF family. Homotrimer. Requires a divalent metal cation as cofactor.

The catalysed reaction is 4-CDP-2-C-methyl-D-erythritol 2-phosphate = 2-C-methyl-D-erythritol 2,4-cyclic diphosphate + CMP. Its pathway is isoprenoid biosynthesis; isopentenyl diphosphate biosynthesis via DXP pathway; isopentenyl diphosphate from 1-deoxy-D-xylulose 5-phosphate: step 4/6. Its function is as follows. Involved in the biosynthesis of isopentenyl diphosphate (IPP) and dimethylallyl diphosphate (DMAPP), two major building blocks of isoprenoid compounds. Catalyzes the conversion of 4-diphosphocytidyl-2-C-methyl-D-erythritol 2-phosphate (CDP-ME2P) to 2-C-methyl-D-erythritol 2,4-cyclodiphosphate (ME-CPP) with a corresponding release of cytidine 5-monophosphate (CMP). This chain is 2-C-methyl-D-erythritol 2,4-cyclodiphosphate synthase, found in Cupriavidus necator (strain ATCC 17699 / DSM 428 / KCTC 22496 / NCIMB 10442 / H16 / Stanier 337) (Ralstonia eutropha).